We begin with the raw amino-acid sequence, 209 residues long: MKNPVETYMNLVPMVVEQTNRGERAYDIFSRLLKERIIFITGPVEDGMATLVCAQLLFLEAENPKKEINLYINSPGGVVTSGMAIYDTMQFIKPAVSTLCIGQAASMGSLLLTAGHKDMRFATPNARIMVHQPSGGFQGQASDIERHAMDIVKLKRRLNEVYVKHTGKSYEEIERTLDRDHFMTADEAKDFGLIDKVISSREPAESAVA.

The active-site Nucleophile is the serine 106. Histidine 131 is an active-site residue.

This sequence belongs to the peptidase S14 family. As to quaternary structure, fourteen ClpP subunits assemble into 2 heptameric rings which stack back to back to give a disk-like structure with a central cavity, resembling the structure of eukaryotic proteasomes.

The protein localises to the cytoplasm. The enzyme catalyses Hydrolysis of proteins to small peptides in the presence of ATP and magnesium. alpha-casein is the usual test substrate. In the absence of ATP, only oligopeptides shorter than five residues are hydrolyzed (such as succinyl-Leu-Tyr-|-NHMec, and Leu-Tyr-Leu-|-Tyr-Trp, in which cleavage of the -Tyr-|-Leu- and -Tyr-|-Trp bonds also occurs).. Functionally, cleaves peptides in various proteins in a process that requires ATP hydrolysis. Has a chymotrypsin-like activity. Plays a major role in the degradation of misfolded proteins. The sequence is that of ATP-dependent Clp protease proteolytic subunit 2 from Mesorhizobium japonicum (strain LMG 29417 / CECT 9101 / MAFF 303099) (Mesorhizobium loti (strain MAFF 303099)).